The sequence spans 324 residues: Cytochrome f (324 aa).

An N-terminal signal peptide occupies residues 1–30 (MNMRFSPKALVRQLGRLSLVACLSLGLLGA). Heme-binding residues include Y42, C62, C65, and H66. A helical transmembrane segment spans residues 290 to 310 (VLGVIAFFFAVMLAQIMLVLK).

This sequence belongs to the cytochrome f family. The 4 large subunits of the cytochrome b6-f complex are cytochrome b6, subunit IV (17 kDa polypeptide, PetD), cytochrome f and the Rieske protein, while the 4 small subunits are PetG, PetL, PetM and PetN. The complex functions as a dimer. It depends on heme as a cofactor.

The protein localises to the cellular thylakoid membrane. Component of the cytochrome b6-f complex, which mediates electron transfer between photosystem II (PSII) and photosystem I (PSI), cyclic electron flow around PSI, and state transitions. The sequence is that of Cytochrome f from Synechococcus elongatus (strain ATCC 33912 / PCC 7942 / FACHB-805) (Anacystis nidulans R2).